Here is a 240-residue protein sequence, read N- to C-terminus: Pathogenesis-related thaumatin-like protein 3.5 (240 aa).

A signal peptide spans 1–20 (MASLRLATLAMMVLFGSCRA). 8 disulfide bridges follow: C31–C237, C79–C89, C94–C100, C145–C227, C150–C210, C158–C173, C177–C186, and C187–C197.

Belongs to the thaumatin family. Strongly expressed in pollen grains. Also present at weak levels in seedling roots, in sapling stems and in developing male strobili.

Functionally, may be involved in disease resistance. The polypeptide is Pathogenesis-related thaumatin-like protein 3.5 (Cryptomeria japonica (Japanese cedar)).